The chain runs to 386 residues: Mannitol-1-phosphate 5-dehydrogenase (386 aa).

Residue 3–14 (AVHFGAGNIGRG) coordinates NAD(+).

It belongs to the mannitol dehydrogenase family.

The catalysed reaction is D-mannitol 1-phosphate + NAD(+) = beta-D-fructose 6-phosphate + NADH + H(+). This Brevibacillus brevis (strain 47 / JCM 6285 / NBRC 100599) protein is Mannitol-1-phosphate 5-dehydrogenase.